The chain runs to 221 residues: Urease accessory protein UreG (221 aa).

19 to 26 (GPVGSGKT) contacts GTP.

This sequence belongs to the SIMIBI class G3E GTPase family. UreG subfamily. In terms of assembly, homodimer. UreD, UreF and UreG form a complex that acts as a GTP-hydrolysis-dependent molecular chaperone, activating the urease apoprotein by helping to assemble the nickel containing metallocenter of UreC. The UreE protein probably delivers the nickel.

Its subcellular location is the cytoplasm. In terms of biological role, facilitates the functional incorporation of the urease nickel metallocenter. This process requires GTP hydrolysis, probably effectuated by UreG. Expression of the urease operon increases the likelihood of bacterial survival by contributing to acid resistance in vitro and in vivo in BALB/c mice. Y.enterocolitica enters the body via an oral path and must survive the acidic stomach before being able to colonize the intestinal mucosa. This chain is Urease accessory protein UreG, found in Yersinia enterocolitica.